A 316-amino-acid chain; its full sequence is tRNA dimethylallyltransferase (316 aa).

Residue 17-24 (GPTASGKT) coordinates ATP. 19–24 (TASGKT) contributes to the substrate binding site. Interaction with substrate tRNA regions lie at residues 42 to 45 (DSAL), 166 to 170 (QRLSR), and 247 to 252 (RCVGYR).

Belongs to the IPP transferase family. Monomer. Mg(2+) serves as cofactor.

The enzyme catalyses adenosine(37) in tRNA + dimethylallyl diphosphate = N(6)-dimethylallyladenosine(37) in tRNA + diphosphate. Its function is as follows. Catalyzes the transfer of a dimethylallyl group onto the adenine at position 37 in tRNAs that read codons beginning with uridine, leading to the formation of N6-(dimethylallyl)adenosine (i(6)A). The polypeptide is tRNA dimethylallyltransferase (Salmonella arizonae (strain ATCC BAA-731 / CDC346-86 / RSK2980)).